A 188-amino-acid chain; its full sequence is Ribosome-recycling factor (188 aa).

It belongs to the RRF family.

It localises to the cytoplasm. Functionally, responsible for the release of ribosomes from messenger RNA at the termination of protein biosynthesis. May increase the efficiency of translation by recycling ribosomes from one round of translation to another. This is Ribosome-recycling factor from Akkermansia muciniphila (strain ATCC BAA-835 / DSM 22959 / JCM 33894 / BCRC 81048 / CCUG 64013 / CIP 107961 / Muc).